The chain runs to 398 residues: UPF0229 protein Ccel_0490 (398 aa).

Disordered stretches follow at residues 1-22 and 68-104; these read MAIFRDCSNIGKDRSAEDRRRH and KSKPGVGAGDGNEKRGDKFPGDSQEGKGKGNAGNSEG. Basic and acidic residues-rich tracts occupy residues 11–22 and 78–95; these read GKDRSAEDRRRH and GNEKRGDKFPGDSQEGKG.

It belongs to the UPF0229 family.

The polypeptide is UPF0229 protein Ccel_0490 (Ruminiclostridium cellulolyticum (strain ATCC 35319 / DSM 5812 / JCM 6584 / H10) (Clostridium cellulolyticum)).